We begin with the raw amino-acid sequence, 695 residues long: D-(-)-3-hydroxybutyrate oligomer hydrolase (695 aa).

Residues 1–17 form the signal peptide; sequence MTTHGWGTRILLGAALA. Ser-308 functions as the Charge relay system in the catalytic mechanism.

It belongs to the D-(-)-3-hydroxybutyrate oligomer hydrolase family.

It localises to the secreted. It catalyses the reaction (3R)-hydroxybutanoate dimer + H2O = 2 (R)-3-hydroxybutanoate + H(+). Its pathway is lipid metabolism; butanoate metabolism. Functionally, participates in the degradation of poly-3-hydroxybutyrate (PHB). It works downstream of poly(3-hydroxybutyrate) depolymerase, hydrolyzing D(-)-3-hydroxybutyrate oligomers of various length (3HB-oligomers) into 3HB-monomers. This is D-(-)-3-hydroxybutyrate oligomer hydrolase from Burkholderia ambifaria (strain ATCC BAA-244 / DSM 16087 / CCUG 44356 / LMG 19182 / AMMD) (Burkholderia cepacia (strain AMMD)).